The following is a 354-amino-acid chain: UDP-N-acetylglucosamine--N-acetylmuramyl-(pentapeptide) pyrophosphoryl-undecaprenol N-acetylglucosamine transferase (354 aa).

UDP-N-acetyl-alpha-D-glucosamine contacts are provided by residues 13–15 (SGG), Asn125, Ser189, Ile242, 261–266 (ALTVSE), and Gln286.

The protein belongs to the glycosyltransferase 28 family. MurG subfamily.

Its subcellular location is the cell inner membrane. The catalysed reaction is di-trans,octa-cis-undecaprenyl diphospho-N-acetyl-alpha-D-muramoyl-L-alanyl-D-glutamyl-meso-2,6-diaminopimeloyl-D-alanyl-D-alanine + UDP-N-acetyl-alpha-D-glucosamine = di-trans,octa-cis-undecaprenyl diphospho-[N-acetyl-alpha-D-glucosaminyl-(1-&gt;4)]-N-acetyl-alpha-D-muramoyl-L-alanyl-D-glutamyl-meso-2,6-diaminopimeloyl-D-alanyl-D-alanine + UDP + H(+). The protein operates within cell wall biogenesis; peptidoglycan biosynthesis. Cell wall formation. Catalyzes the transfer of a GlcNAc subunit on undecaprenyl-pyrophosphoryl-MurNAc-pentapeptide (lipid intermediate I) to form undecaprenyl-pyrophosphoryl-MurNAc-(pentapeptide)GlcNAc (lipid intermediate II). The chain is UDP-N-acetylglucosamine--N-acetylmuramyl-(pentapeptide) pyrophosphoryl-undecaprenol N-acetylglucosamine transferase from Buchnera aphidicola subsp. Acyrthosiphon pisum (strain 5A).